The sequence spans 262 residues: Acyl-[acyl-carrier-protein]--UDP-N-acetylglucosamine O-acyltransferase (262 aa).

Belongs to the transferase hexapeptide repeat family. LpxA subfamily. In terms of assembly, homotrimer.

It localises to the cytoplasm. It carries out the reaction a (3R)-hydroxyacyl-[ACP] + UDP-N-acetyl-alpha-D-glucosamine = a UDP-3-O-[(3R)-3-hydroxyacyl]-N-acetyl-alpha-D-glucosamine + holo-[ACP]. It functions in the pathway glycolipid biosynthesis; lipid IV(A) biosynthesis; lipid IV(A) from (3R)-3-hydroxytetradecanoyl-[acyl-carrier-protein] and UDP-N-acetyl-alpha-D-glucosamine: step 1/6. Functionally, involved in the biosynthesis of lipid A, a phosphorylated glycolipid that anchors the lipopolysaccharide to the outer membrane of the cell. This is Acyl-[acyl-carrier-protein]--UDP-N-acetylglucosamine O-acyltransferase from Aliivibrio salmonicida (strain LFI1238) (Vibrio salmonicida (strain LFI1238)).